The sequence spans 155 residues: MLYRDPYEFLKSIPKDKCIMCLDMGEKQIGIAFSDKTQLIATAHSVYYRKNISKDLGYLNRIFKKNEAGSIVIGLPLEIDGQKSEWCKTIIKFANKMIKKYKVSTYLQDESLSTSIAAHTLKISGVSTTKSKRIDDKISACIILQRTLDKINVIK.

It belongs to the YqgF nuclease family.

Its subcellular location is the cytoplasm. Its function is as follows. Could be a nuclease involved in processing of the 5'-end of pre-16S rRNA. The polypeptide is Putative pre-16S rRNA nuclease (Wolbachia sp. subsp. Brugia malayi (strain TRS)).